A 207-amino-acid chain; its full sequence is Protein ERP4 (207 aa).

Residues 1–21 (MRVFTLIAILFSSSLLTHAFS) form the signal peptide. Residues 22 to 174 (SNYAPVGISL…TVSSTESRLT (153 aa)) lie on the Lumenal side of the membrane. Positions 36–118 (KECLYYDLSS…PKKVEITLEK (83 aa)) constitute a GOLD domain. Residues 175–195 (WLSLLIMGVMVGISIVQALII) traverse the membrane as a helical segment. Residues 196–207 (QFFFTSRQKNYV) are Cytoplasmic-facing.

It belongs to the EMP24/GP25L family.

The protein resides in the endoplasmic reticulum membrane. Its function is as follows. Involved in vesicular protein trafficking. In Saccharomyces cerevisiae (strain ATCC 204508 / S288c) (Baker's yeast), this protein is Protein ERP4 (ERP4).